A 477-amino-acid polypeptide reads, in one-letter code: Ribulose bisphosphate carboxylase large chain (477 aa).

A propeptide spanning residues 1–2 (MS) is cleaved from the precursor. N-acetylproline is present on Pro-3. Substrate-binding residues include Asn-123 and Thr-173. Catalysis depends on Lys-175, which acts as the Proton acceptor. A substrate-binding site is contributed by Lys-177. Mg(2+)-binding residues include Lys-201, Asp-203, and Glu-204. An N6-carboxylysine modification is found at Lys-201. The Proton acceptor role is filled by His-294. Positions 295, 327, and 379 each coordinate substrate.

The protein belongs to the RuBisCO large chain family. Type I subfamily. In terms of assembly, heterohexadecamer of 8 large chains and 8 small chains; disulfide-linked. The disulfide link is formed within the large subunit homodimers. Requires Mg(2+) as cofactor. In terms of processing, the disulfide bond which can form in the large chain dimeric partners within the hexadecamer appears to be associated with oxidative stress and protein turnover.

It is found in the plastid. Its subcellular location is the chloroplast. The catalysed reaction is 2 (2R)-3-phosphoglycerate + 2 H(+) = D-ribulose 1,5-bisphosphate + CO2 + H2O. It catalyses the reaction D-ribulose 1,5-bisphosphate + O2 = 2-phosphoglycolate + (2R)-3-phosphoglycerate + 2 H(+). In terms of biological role, ruBisCO catalyzes two reactions: the carboxylation of D-ribulose 1,5-bisphosphate, the primary event in carbon dioxide fixation, as well as the oxidative fragmentation of the pentose substrate in the photorespiration process. Both reactions occur simultaneously and in competition at the same active site. This is Ribulose bisphosphate carboxylase large chain from Lolium perenne (Perennial ryegrass).